A 385-amino-acid chain; its full sequence is Sesquiterpene alcohol synthase (385 aa).

Mg(2+)-binding residues include Asp123 and Asp127. Positions 123–127 (DDISD) match the DDXXD motif motif.

The protein belongs to the terpene synthase family. It depends on Mg(2+) as a cofactor. Specifically expressed in tissues lining the cuticle of the abdominal sternites of mature males.

The catalysed reaction is (2E,6E)-farnesyl diphosphate + H2O = (1S,6S,7R)-sesquipiperitol + diphosphate. Its pathway is pheromone biosynthesis. In terms of biological role, sesquiterpene alcohol synthase that catalyzes the formation of (1S,6S,7R)-sesquipiperitol, a terpene intermediate in murgantiol biosynthesis, a male-released aggregation pheromone. The chain is Sesquiterpene alcohol synthase from Murgantia histrionica (Harlequin bug).